A 313-amino-acid chain; its full sequence is MPIKIDKKLPAVDILSSENIFVMDDDRADHQDIRPLNILVLNLMPQKMVTETQILRHLANTPLQLTIDFLYMSSHQSKTTRAEHMETFYKTFDEVKNRYFDGLIITGAPVEHLPFEAVDYWEEFQRVIEWSKTHVFSTLHICWGAQAGLYARYGVDKHQMTRKLSGVYSQLADSSNLLFRGFDDEFYAPHSRHTEVLKEDIVNLTNLEILSYGEDMGLSVLASRDLREVYSFGHMEYDRDTLSKEYFRDLKAGKNPHIPENYFKNDDVHTTPALCWSSAAALFFSNWVNYAVYQETPFDWESPENDVSFFAYL.

Residue Cys-142 is the Acyl-thioester intermediate of the active site. Residues Lys-163 and Ser-191 each coordinate substrate. His-234 (proton acceptor) is an active-site residue. Glu-236 is a catalytic residue. Arg-248 is a substrate binding site.

This sequence belongs to the MetA family.

It is found in the cytoplasm. The catalysed reaction is L-homoserine + acetyl-CoA = O-acetyl-L-homoserine + CoA. It functions in the pathway amino-acid biosynthesis; L-methionine biosynthesis via de novo pathway; O-acetyl-L-homoserine from L-homoserine: step 1/1. In terms of biological role, transfers an acetyl group from acetyl-CoA to L-homoserine, forming acetyl-L-homoserine. The chain is Homoserine O-acetyltransferase from Streptococcus sanguinis (strain SK36).